A 359-amino-acid polypeptide reads, in one-letter code: UDP-3-O-acylglucosamine N-acyltransferase (359 aa).

His247 acts as the Proton acceptor in catalysis.

It belongs to the transferase hexapeptide repeat family. LpxD subfamily. As to quaternary structure, homotrimer.

It carries out the reaction a UDP-3-O-[(3R)-3-hydroxyacyl]-alpha-D-glucosamine + a (3R)-hydroxyacyl-[ACP] = a UDP-2-N,3-O-bis[(3R)-3-hydroxyacyl]-alpha-D-glucosamine + holo-[ACP] + H(+). It functions in the pathway bacterial outer membrane biogenesis; LPS lipid A biosynthesis. Functionally, catalyzes the N-acylation of UDP-3-O-acylglucosamine using 3-hydroxyacyl-ACP as the acyl donor. Is involved in the biosynthesis of lipid A, a phosphorylated glycolipid that anchors the lipopolysaccharide to the outer membrane of the cell. This Chlorobium chlorochromatii (strain CaD3) protein is UDP-3-O-acylglucosamine N-acyltransferase.